The following is a 97-amino-acid chain: uncharacterized protein (97 aa).

The N-terminal stretch at methionine 1–glycine 16 is a signal peptide. Cysteine 17 carries the N-palmitoyl cysteine lipid modification. The S-diacylglycerol cysteine moiety is linked to residue cysteine 17.

It is found in the cell membrane. This is an uncharacterized protein from Bacillus subtilis (strain 168).